The sequence spans 223 residues: Thiamine-phosphate synthase (223 aa).

Residues 37 to 41 and asparagine 69 each bind 4-amino-2-methyl-5-(diphosphooxymethyl)pyrimidine; that span reads QLREK. Residues aspartate 70 and aspartate 89 each contribute to the Mg(2+) site. A 4-amino-2-methyl-5-(diphosphooxymethyl)pyrimidine-binding site is contributed by serine 108. Residue 134-136 coordinates 2-[(2R,5Z)-2-carboxy-4-methylthiazol-5(2H)-ylidene]ethyl phosphate; sequence TGT. Residue lysine 137 coordinates 4-amino-2-methyl-5-(diphosphooxymethyl)pyrimidine. Residues glycine 167 and 187-188 contribute to the 2-[(2R,5Z)-2-carboxy-4-methylthiazol-5(2H)-ylidene]ethyl phosphate site; that span reads VS. A disordered region spans residues 197-223; sequence AAATRKLQGSVDTASVESQLPSEEPSA. The segment covering 206-217 has biased composition (polar residues); that stretch reads SVDTASVESQLP.

This sequence belongs to the thiamine-phosphate synthase family. The cofactor is Mg(2+).

The catalysed reaction is 2-[(2R,5Z)-2-carboxy-4-methylthiazol-5(2H)-ylidene]ethyl phosphate + 4-amino-2-methyl-5-(diphosphooxymethyl)pyrimidine + 2 H(+) = thiamine phosphate + CO2 + diphosphate. It catalyses the reaction 2-(2-carboxy-4-methylthiazol-5-yl)ethyl phosphate + 4-amino-2-methyl-5-(diphosphooxymethyl)pyrimidine + 2 H(+) = thiamine phosphate + CO2 + diphosphate. The enzyme catalyses 4-methyl-5-(2-phosphooxyethyl)-thiazole + 4-amino-2-methyl-5-(diphosphooxymethyl)pyrimidine + H(+) = thiamine phosphate + diphosphate. The protein operates within cofactor biosynthesis; thiamine diphosphate biosynthesis; thiamine phosphate from 4-amino-2-methyl-5-diphosphomethylpyrimidine and 4-methyl-5-(2-phosphoethyl)-thiazole: step 1/1. Its function is as follows. Condenses 4-methyl-5-(beta-hydroxyethyl)thiazole monophosphate (THZ-P) and 2-methyl-4-amino-5-hydroxymethyl pyrimidine pyrophosphate (HMP-PP) to form thiamine monophosphate (TMP). The sequence is that of Thiamine-phosphate synthase from Haloquadratum walsbyi (strain DSM 16790 / HBSQ001).